We begin with the raw amino-acid sequence, 236 residues long: Small ribosomal subunit protein uS10m (236 aa).

The N-terminal 24 residues, 1–24, are a transit peptide targeting the mitochondrion; sequence MMRQSIRPLRAFSSEVSWIARRTQ. The segment at 29–49 is disordered; that stretch reads KPGDLVPNKPEPSKNEQEPRF. Basic and acidic residues predominate over residues 39 to 49; it reads EPSKNEQEPRF.

Belongs to the universal ribosomal protein uS10 family. Part of the mitochondrial small ribosomal subunit.

The protein localises to the mitochondrion. Functionally, involved in mitochondrial genome encoded proteins translation. Involved in the binding of tRNA to the ribosomes. The chain is Small ribosomal subunit protein uS10m (RSM10) from Gibberella zeae (strain ATCC MYA-4620 / CBS 123657 / FGSC 9075 / NRRL 31084 / PH-1) (Wheat head blight fungus).